Consider the following 140-residue polypeptide: Profilin-2 (140 aa).

Residue Ala-2 is modified to N-acetylalanine.

It belongs to the profilin family. In terms of assembly, occurs in many kinds of cells as a complex with monomeric actin in a 1:1 ratio. Interacts with PFN2. Interacts with ACTMAP (via N-terminus); the interaction may facilitate efficient cleavage of the acetylated N-terminus of immature actin by ACTMAP.

The protein localises to the cytoplasm. Its subcellular location is the cytoskeleton. Functionally, binds to actin and affects the structure of the cytoskeleton. At high concentrations, profilin prevents the polymerization of actin, whereas it enhances it at low concentrations. By binding to PIP2, it inhibits the formation of IP3 and DG. This is Profilin-2 (PFN2) from Bos taurus (Bovine).